Here is a 226-residue protein sequence, read N- to C-terminus: Lipoprotein-releasing system ATP-binding protein LolD (226 aa).

In terms of domain architecture, ABC transporter spans V6 to V226. G42–S49 is an ATP binding site.

Belongs to the ABC transporter superfamily. Lipoprotein translocase (TC 3.A.1.125) family. The complex is composed of two ATP-binding proteins (LolD) and two transmembrane proteins (LolC and LolE).

It localises to the cell inner membrane. Part of the ABC transporter complex LolCDE involved in the translocation of mature outer membrane-directed lipoproteins, from the inner membrane to the periplasmic chaperone, LolA. Responsible for the formation of the LolA-lipoprotein complex in an ATP-dependent manner. The protein is Lipoprotein-releasing system ATP-binding protein LolD of Treponema denticola (strain ATCC 35405 / DSM 14222 / CIP 103919 / JCM 8153 / KCTC 15104).